The sequence spans 70 residues: Large ribosomal subunit protein bL31 (70 aa).

The Zn(2+) site is built by C16, C18, C37, and C40.

Belongs to the bacterial ribosomal protein bL31 family. Type A subfamily. Part of the 50S ribosomal subunit. Requires Zn(2+) as cofactor.

Its function is as follows. Binds the 23S rRNA. The sequence is that of Large ribosomal subunit protein bL31 from Salmonella agona (strain SL483).